Reading from the N-terminus, the 1488-residue chain is MIERGKFRSLTLINWNGFFARTFDLDELVTTLSGGNGAGKSTTMAAFVTALIPDLTLLHFRNTTEAGATSGSRDKGLHGKLKAGVCYSMLDTINSRHQRVVVGVRLQQVAGRDRKVDIKPFAIQGLPMSVQPTQLVTETLNERQARVLSLAELKDKLDEMEGVQFKQFNSITDYHSLMFDLGIIARRLRSASDRSKFYRLIEASLYGGISSAITRSLRDYLLPENSGVRKAFQDMEAALRENRLTLEAIRVTQSDRDLFKHLISEATDYVAADYMRHANERRVHLDQALAFRRELYTSRKQLAAEQYKHVDMARELGEHNGAEGSLEADYQAASDHLNLVQTALRQQEKIERYEADLEELQIRLEEQNEVVAEAAEMQDENEARAEAAELEVDELKSQLADYQQALDVQQTRAIQYNQAISALARAKELCHLPDLTPESAAEWLDTFQAKEQEATEKLLSLEQKMSVAQTAHSQFEQAYQLVAAINGPLARSEAWDVARELLRDGVNQRHLAEQVQPLRMRLSELEQRLREQQEAERLLAEFCKRQGKNFDIDELEALHQELEARIASLSESVSSASEQRMALRQEQEQLQSRIQHLMQRAPVWLAAQNSLNQLSEQCGEEFTSSQEVTEYLQQLLEREREAIVERDEVGARKNAVDEEIERLSQPGGAEDQRLNALAERFGGVLLSEIYDDVSLEDAPYFSALYGPSRHAIVVPDLSQIAEQLEGLTDCPEDLYLIEGDPQSFDDSVFSVDELEKAVVVKIADRQWRYSRFPSLPIFGRAARENRIESLHAEREVLSERFATLSFDVQKTQRLHQAFSRFIGSHLSVAFEDDPEAEIRRLNGRRVELERALATHESDNQQQRLQFEQAKEGVSALNRLLPRLNLLADETLADRVDEIQERLDEAQEAARFVQQYGNQLAKLEPVVSVLQSDPEQFEQLKEDYAWSQQMQRDARQQAFALAEVVERRAHFSYSDSAEMLSGNSDLNEKLRQRLEQAEAERTRAREALRSHAAQLSQYSQVLASLKSSYDTKKELLNDLQRELQDIGVRADSGAEERARQRRDELHAQLSNNRSRRNQLEKALTFCEAEMENLTRKLRKLERDYHEMREQVVTAKAGWCAVMRMVKDNGVERRLHRRELAYLSADELRSMSDKALGALRLAVADNEHLRDVLRLSEDPKRPERKIQFFVAVYQHLRERIRQDIIRTDDPVEAIEQMEIELSRLTEELTSREQKLAISSRSVANIIRKTIQREQNRIRMLNQGLQSVSFGQVNSVRLNVNVRETHATLLDVLSEQQEQHQDLFNSNRLTFSEALAKLYQRLNPQIDMGQRTPQTIGEELLDYRNYLEMEVEVNRGSDGWLRAESGALSTGEAIGTGMSILVIVVQSWEDEARRLRGKDISPCRLLFLDEAARLDARSIATLFELCERLQMQLIIAAPENISPEKGTTYKLVRKVFQNTEHVHVVGLRGFAPQLPETLPGTQTEDTPSEAS.

34-41 (GGNGAGKS) is a binding site for ATP. Coiled coils occupy residues 326–418 (LEAD…QYNQ), 444–472 (LDTF…QTAH), and 509–602 (RHLA…QRAP). The flexible hinge stretch occupies residues 666–783 (PGGAEDQRLN…SLPIFGRAAR (118 aa)). 3 coiled-coil regions span residues 835–923 (EAEI…AKLE), 977–1116 (EMLS…AKAG), and 1209–1265 (VEAI…LQSV). The segment at 1049-1074 (ADSGAEERARQRRDELHAQLSNNRSR) is disordered. A compositionally biased stretch (basic and acidic residues) spans 1051–1065 (SGAEERARQRRDELH).

Belongs to the SMC family. MukB subfamily. Homodimerization via its hinge domain. Binds to DNA via its C-terminal region. Interacts, and probably forms a ternary complex, with MukE and MukF via its C-terminal region. The complex formation is stimulated by calcium or magnesium. Interacts with tubulin-related protein FtsZ.

The protein resides in the cytoplasm. The protein localises to the nucleoid. Its function is as follows. Plays a central role in chromosome condensation, segregation and cell cycle progression. Functions as a homodimer, which is essential for chromosome partition. Involved in negative DNA supercoiling in vivo, and by this means organize and compact chromosomes. May achieve or facilitate chromosome segregation by condensation DNA from both sides of a centrally located replisome during cell division. The sequence is that of Chromosome partition protein MukB from Salmonella gallinarum (strain 287/91 / NCTC 13346).